Consider the following 497-residue polypeptide: uncharacterized protein (497 aa).

The segment at 474 to 497 is disordered; that stretch reads DPRNPFSNGKPSGWSDEDVAWLKR. The segment covering 488–497 has biased composition (acidic residues); sequence SDEDVAWLKR.

This is an uncharacterized protein from Bacillus anthracis.